A 179-amino-acid polypeptide reads, in one-letter code: Nucleoside diphosphate kinase 6 (179 aa).

ATP-binding residues include Lys-18, Phe-67, Arg-95, Thr-101, Arg-115, and Asn-125. Residue His-128 is the Pros-phosphohistidine intermediate of the active site.

Belongs to the NDK family. It depends on Mg(2+) as a cofactor.

It catalyses the reaction a 2'-deoxyribonucleoside 5'-diphosphate + ATP = a 2'-deoxyribonucleoside 5'-triphosphate + ADP. The catalysed reaction is a ribonucleoside 5'-diphosphate + ATP = a ribonucleoside 5'-triphosphate + ADP. In terms of biological role, major role in the synthesis of nucleoside triphosphates other than ATP. The ATP gamma phosphate is transferred to the NDP beta phosphate via a ping-pong mechanism, using a phosphorylated active-site intermediate. This is Nucleoside diphosphate kinase 6 (nme6) from Xenopus tropicalis (Western clawed frog).